Here is a 384-residue protein sequence, read N- to C-terminus: Potassium channel subfamily K member 18 (384 aa).

Over 1 to 23 (MEVSGHPQARRCCPEALGKLFPG) the chain is Cytoplasmic. Residues 24–44 (LCFLCFLVTYALVGAVVFSAI) traverse the membrane as a helical segment. N-linked (GlcNAc...) asparagine glycosylation is present at Asn-70. An intramembrane region (pore-forming) is located at residues 103–129 (FLSSLFFCCTVFSTVGYGYIYPVTRLG). K(+) is bound by residues Thr-116, Val-117, Gly-118, and Tyr-119. Residues 116-121 (TVGYGY) form a selectivity filter 1 region. Residues 130–148 (KYLCMLYALFGIPLMFLVL) form a helical membrane-spanning segment. Residues 149 to 280 (TDTGDILATI…EVGQQVERLD (132 aa)) lie on the Cytoplasmic side of the membrane. The interval 200–205 (PQIIIS) is interaction with calcineurin. The interaction with YWHAH stretch occupies residues 249–254 (RSNSCP). A phosphoserine mark is found at Ser-252 and Ser-264. A helical transmembrane segment spans residues 281 to 301 (IPLPIIALIVFAYISCAAAIL). The pore-forming intramembrane region spans 314-328 (FYFCFVTLTTIGFGD). Residues 323–328 (TIGFGD) form a selectivity filter 2 region. The chain crosses the membrane as a helical span at residues 335-355 (NFFLFFSIYIIVGMEIVFIAF). The Cytoplasmic segment spans residues 356–384 (KLVQNRLIDIYKNVMLFFAKGKFYHLVKK).

This sequence belongs to the two pore domain potassium channel (TC 1.A.1.8) family. As to quaternary structure, homodimer. Heterodimer with KCNK2. Heterodimer with KCNK10. Interacts with calcineurin. Interacts with YWHAH, in a phosphorylation-dependent manner. Post-translationally, N-glycosylated. Phosphorylation of Ser-264 is required for the binding of 14-3-3eta/YWHAH. Calcineurin-mediated dephosphorylation enhances channel activity. Expressed in dorsal root ganglion and trigeminal ganglion neurons. Detected at low levels in spinal cord. Expressed in regulatory T cells (at protein level).

Its subcellular location is the cell membrane. It catalyses the reaction K(+)(in) = K(+)(out). With respect to regulation, activated by volatile anesthetics but inhibited by amide local anesthetics. Inhibited by Ba(2+) ions. Inhibited by free polyunsaturated fatty acids. Channel conductance is sensitive to intracellular pH, it decreases at acidic pH and increases at basic pH. In contrast to its mouse ortholog, it is not regulated by extracellular protons. Insensitive to changes in temperature. K(+) channel that conducts outward and inward rectifying currents at depolarized and hyperpolarized membrane potentials, respectively. The outward rectifying currents are voltage-dependent, coupled to K(+) electrochemical gradient across the membrane, whereas the inward currents can be induced in response to activation of Ca(2+)-mobilizing receptors. Homo- and heterodimerizes to form functional channels with distinct regulatory and gating properties. In trigeminal ganglia sensory neurons, the heterodimers of KCNK18/TRESK and KCNK2/TREK-1 or KCNK10/TREK-2 inhibit neuronal firing and neurogenic inflammation by stabilizing the resting membrane potential at K(+) equilibrium potential as well as by regulating the threshold of action potentials and the spike frequency. In thymocytes, conducts K(+) currents upon T cell receptor (TCR) signaling leading to sustained Ca(2+) influx and NF-kappa-B activation, FOXP3 transcription and positive selection of regulatory T cell (Treg) progenitor subsets. Appears to mediate the analgesics effects of hydroxy-alpha-sanshool, a metabolite naturally present in Schezuan pepper and other Xanthoxylum plants. The protein is Potassium channel subfamily K member 18 of Homo sapiens (Human).